Consider the following 85-residue polypeptide: Protein WIR1B (85 aa).

Residues 1-12 (MASHSAAGRRPT) lie on the Cytoplasmic side of the membrane. A helical transmembrane segment spans residues 13-34 (ALVHIALFVAIAAVIINSSVCL). Residues 35 to 85 (GAAVHDAATSGTGALDPNVPAVPTPGGAGQPYTGRGCRTVYGCKPPAGSQP) are Extracellular-facing.

The protein resides in the membrane. Its function is as follows. Associated with pathogen defense. In Triticum aestivum (Wheat), this protein is Protein WIR1B (WIR1B).